Reading from the N-terminus, the 787-residue chain is Protein smoothened (787 aa).

A signal peptide spans 1-27 (MAAARPARGPELPLLGLLLLLLLGDPG). Over 28–233 (RGAASSGNAT…EAEHQDMHSY (206 aa)) the chain is Extracellular. Residues 30 to 60 (AASSGNATGPGPRSAGGSARRSAAVTGPPPP) form a disordered region. An N-linked (GlcNAc...) asparagine glycan is attached at N35. Positions 38–53 (GPGPRSAGGSARRSAA) are enriched in low complexity. 5 disulfides stabilise this stretch: C64–C178, C70–C134, C78–C127, C118–C154, and C147–C169. Residues 65–181 (GRAAPCEPLR…DRFPEGCTNE (117 aa)) enclose the FZ domain. Cholesterol is bound at residue D95. An N-linked (GlcNAc...) asparagine glycan is attached at N188. Cystine bridges form between C193–C213 and C217–C295. Residues 234-254 (IAAFGAVTGLCTLFTLATFVA) traverse the membrane as a helical segment. Topologically, residues 255-262 (DWRNSNRY) are cytoplasmic. A helical membrane pass occupies residues 263–283 (PAVILFYVNACFFVGSIGWLA). The Extracellular portion of the chain corresponds to 284–314 (QFMDGARREIVCRADGTMRLGEPTSNETLSC). N309 is a glycosylation site (N-linked (GlcNAc...) asparagine). C314 and C390 are disulfide-bonded. A helical membrane pass occupies residues 315-335 (VIIFVIVYYALMAGVVWFVVL). The Cytoplasmic portion of the chain corresponds to 336 to 358 (TYAWHTSFKALGTTYQPLSGKTS). The chain crosses the membrane as a helical span at residues 359-379 (YFHLLTWSLPFVLTVAILAVA). Topologically, residues 380-402 (QVDGDSVSGICFVGYKNYRYRAG) are extracellular. Y394 is a binding site for cholesterol. Residues 403 to 423 (FVLAPIGLVLIVGGYFLIRGV) form a helical membrane-spanning segment. Residues 424–451 (MTLFSIKSNHPGLLSEKAASKINETMLR) lie on the Cytoplasmic side of the membrane. The chain crosses the membrane as a helical span at residues 452–472 (LGIFGFLAFGFVLITFSCHFY). Over 473-524 (DFFNQAEWERSFRDYVLCQANVTIGLPTKQPIPDCEIKNRPSLLVEKINLFA) the chain is Extracellular. Cysteines 490 and 507 form a disulfide. A helical membrane pass occupies residues 525–545 (MFGTGIAMSTWVWTKATLLIW). The interval 538 to 569 (TKATLLIWRRTWCRLTGQSDDEPKRIKKSKMI) is interaction with BBS5 and BBS7. Topologically, residues 546–787 (RRTWCRLTGQ…TELMDADSDF (242 aa)) are cytoplasmic. Phosphoserine occurs at positions 556, 574, and 590. The required for interaction with PRKACA stretch occupies residues 570–653 (AKAFSKRHEL…TPVPPEEQAN (84 aa)). The tract at residues 581–593 (QNPGQELSFSMHT) is interaction with DLG5. Residue T593 is modified to Phosphothreonine. Phosphoserine is present on residues S595 and S638. 2 positions are modified to phosphothreonine: T640 and T644. S662 carries the post-translational modification Phosphoserine. Positions 667 to 704 (KRLGRKKKRRKRKKEVCPLAPPPELHPPAPAPSTIPRL) are disordered. Residues 668-680 (RLGRKKKRRKRKK) are compositionally biased toward basic residues. Pro residues predominate over residues 685 to 699 (LAPPPELHPPAPAPS).

This sequence belongs to the G-protein coupled receptor Fz/Smo family. As to quaternary structure, homodimer. Interacts (via C-terminus) with protein kinase A catalytic subunit PRKACA; interacts with free PRKACA subunits and the interaction leads to sequestration of PRKACA at the membrane, preventing PRKACA-mediated phosphorylation of GLI transcription factors. Interacts with ARRB2. Interacts with KIF7. Interacts with BBS5 and BBS7; the interactions are indicative for the association of SMO with the BBsome complex to facilitate ciliary localization of SMO. Interacts with DLG5 and SDCBP. Interacts with GAS8/DRC4. In terms of processing, phosphorylation by GRK kinases is required for interaction with protein kinase A catalytic subunit PRKACA.

The protein localises to the cell membrane. It is found in the cell projection. It localises to the cilium. In terms of biological role, g protein-coupled receptor which associates with the patched protein (PTCH) to transduce hedgehog protein signaling. Binding of sonic hedgehog (SHH) to its receptor patched prevents inhibition of smoothened (SMO) by patched. When active, SMO binds to and sequesters protein kinase A catalytic subunit PRKACA at the cell membrane, preventing PRKACA-mediated phosphorylation of GLI transcription factors which releases the GLI proteins from PRKACA-mediated inhibition and allows for transcriptional activation of hedgehog pathway target genes. Required for the accumulation of KIF7, GLI2 and GLI3 in the cilia. Interacts with DLG5 at the ciliary base to induce the accumulation of KIF7 and GLI2 at the ciliary tip for GLI2 activation. In Homo sapiens (Human), this protein is Protein smoothened (SMO).